Consider the following 334-residue polypeptide: MYNTDVVIIGAGPVGLFAVFQAGMLGMKCHVIDAQEVIGGQCITLYPEKPIYDIPAYPKIAAEELIKQLELQAAPFNPIYHLNQQAIELNKQDDFFEIKTSKNTLIKGKVIIIAAGAGSFGPNKPPLANIEDFESKSVFYFINDKSKFAGKNIVIAGGGDSAVDWAIFLSDIANKIYLVHRRDKFTAAPESVRQLRHIAETDKIELVTGYQLNALDGNNAELQSVIVKDLHNNTRKLDANILLPFFGLKQDLGSLANWGLNVKHHHIEVDSSYYQTNIEGIYAIGDIAHYGGKLKLILTGFAEAASSLHHAYSRVFDGKALHFEYSTTKYGEKK.

7 residues coordinate FAD: Asp-33, Gln-41, Tyr-46, Ala-86, Phe-120, Asp-286, and Thr-327.

The protein belongs to the ferredoxin--NADP reductase type 2 family. As to quaternary structure, homodimer. Requires FAD as cofactor.

It carries out the reaction 2 reduced [2Fe-2S]-[ferredoxin] + NADP(+) + H(+) = 2 oxidized [2Fe-2S]-[ferredoxin] + NADPH. The chain is Ferredoxin--NADP reductase from Rickettsia massiliae (strain Mtu5).